A 98-amino-acid polypeptide reads, in one-letter code: Large ribosomal subunit protein uL23 (98 aa).

This sequence belongs to the universal ribosomal protein uL23 family. As to quaternary structure, part of the 50S ribosomal subunit. Contacts protein L29, and trigger factor when it is bound to the ribosome.

One of the early assembly proteins it binds 23S rRNA. One of the proteins that surrounds the polypeptide exit tunnel on the outside of the ribosome. Forms the main docking site for trigger factor binding to the ribosome. The chain is Large ribosomal subunit protein uL23 from Streptococcus sanguinis (strain SK36).